A 488-amino-acid chain; its full sequence is Elongation factor Tu, chloroplastic (488 aa).

Positions M1–P20 are disordered. A chloroplast-targeting transit peptide spans M1–R79. The region spanning K89–Q293 is the tr-type G domain. The G1 stretch occupies residues G98–T105. Residue G98–T105 coordinates GTP. The segment at G139 to N143 is G2. The G3 stretch occupies residues D160–G163. GTP contacts are provided by residues D160–H164 and N215–D218. The interval N215–D218 is G4. The tract at residues S253–L255 is G5.

Belongs to the TRAFAC class translation factor GTPase superfamily. Classic translation factor GTPase family. EF-Tu/EF-1A subfamily. In terms of tissue distribution, higher expression in leaves than in roots.

It localises to the plastid. It is found in the chloroplast. In terms of biological role, this protein promotes the GTP-dependent binding of aminoacyl-tRNA to the A-site of ribosomes during protein biosynthesis. The protein is Elongation factor Tu, chloroplastic (tufA) of Pisum sativum (Garden pea).